We begin with the raw amino-acid sequence, 205 residues long: MSALTDWQTAPALLALAALIGYLLGSIPFGLILTRMAGLGDVRKIGSGNIGATNVLRTGNKKLAAATLLLDALKGTAAVLVANALWGYEASLVAGFFAFLGHLFPVWLGFKGGKGVAVYIGVLLGAAPLMMLAFALIWLATAFITRYSSLSALLAMLIIPVALWVLGPEKTAMLVTLLSVISWWKHRENIRRLMAGTESRIGQKG.

The next 5 helical transmembrane spans lie at 13 to 33 (LLAL…GLIL), 68 to 88 (LLLD…LWGY), 90 to 110 (ASLV…WLGF), 120 to 140 (IGVL…IWLA), and 147 to 167 (YSSL…WVLG).

Belongs to the PlsY family. As to quaternary structure, probably interacts with PlsX.

It localises to the cell inner membrane. It carries out the reaction an acyl phosphate + sn-glycerol 3-phosphate = a 1-acyl-sn-glycero-3-phosphate + phosphate. It functions in the pathway lipid metabolism; phospholipid metabolism. Catalyzes the transfer of an acyl group from acyl-phosphate (acyl-PO(4)) to glycerol-3-phosphate (G3P) to form lysophosphatidic acid (LPA). This enzyme utilizes acyl-phosphate as fatty acyl donor, but not acyl-CoA or acyl-ACP. This Agrobacterium fabrum (strain C58 / ATCC 33970) (Agrobacterium tumefaciens (strain C58)) protein is Glycerol-3-phosphate acyltransferase.